A 639-amino-acid chain; its full sequence is Threonine--tRNA ligase (639 aa).

The region spanning Met-1–Lys-61 is the TGS domain. The segment at Asp-242–Pro-532 is catalytic. Cys-333, His-384, and His-509 together coordinate Zn(2+).

Belongs to the class-II aminoacyl-tRNA synthetase family. In terms of assembly, homodimer. The cofactor is Zn(2+).

It localises to the cytoplasm. The catalysed reaction is tRNA(Thr) + L-threonine + ATP = L-threonyl-tRNA(Thr) + AMP + diphosphate + H(+). In terms of biological role, catalyzes the attachment of threonine to tRNA(Thr) in a two-step reaction: L-threonine is first activated by ATP to form Thr-AMP and then transferred to the acceptor end of tRNA(Thr). Also edits incorrectly charged L-seryl-tRNA(Thr). The polypeptide is Threonine--tRNA ligase (Clostridioides difficile (strain 630) (Peptoclostridium difficile)).